We begin with the raw amino-acid sequence, 196 residues long: Glycerol-3-phosphate acyltransferase (196 aa).

4 helical membrane passes run 3-23, 78-98, 112-132, and 154-174; these read NAVFVIAAYLLGSISFGILVS, VGVVCWVAVAVFLGHLYPVFY, VLLAFSPLLAGLALLSWIVVF, and WLLLPQIGYIIVVFVLSLLLI.

The protein belongs to the PlsY family. Probably interacts with PlsX.

It is found in the cell inner membrane. It catalyses the reaction an acyl phosphate + sn-glycerol 3-phosphate = a 1-acyl-sn-glycero-3-phosphate + phosphate. Its pathway is lipid metabolism; phospholipid metabolism. In terms of biological role, catalyzes the transfer of an acyl group from acyl-phosphate (acyl-PO(4)) to glycerol-3-phosphate (G3P) to form lysophosphatidic acid (LPA). This enzyme utilizes acyl-phosphate as fatty acyl donor, but not acyl-CoA or acyl-ACP. The protein is Glycerol-3-phosphate acyltransferase of Methylobacillus flagellatus (strain ATCC 51484 / DSM 6875 / VKM B-1610 / KT).